A 230-amino-acid chain; its full sequence is Large ribosomal subunit protein uL4 (230 aa).

The disordered stretch occupies residues 59–113 (RQGTHATKTRGEVSGGGKKPYRQKGTGRARQGSTRAPQFTGGGTVHGPQPRDYSQ).

This sequence belongs to the universal ribosomal protein uL4 family. As to quaternary structure, part of the 50S ribosomal subunit.

One of the primary rRNA binding proteins, this protein initially binds near the 5'-end of the 23S rRNA. It is important during the early stages of 50S assembly. It makes multiple contacts with different domains of the 23S rRNA in the assembled 50S subunit and ribosome. In terms of biological role, forms part of the polypeptide exit tunnel. This is Large ribosomal subunit protein uL4 from Nocardia farcinica (strain IFM 10152).